Reading from the N-terminus, the 450-residue chain is Phosphoglucosamine mutase (450 aa).

Ser-102 serves as the catalytic Phosphoserine intermediate. Ser-102, Asp-243, Asp-245, and Asp-247 together coordinate Mg(2+). Ser-102 is modified (phosphoserine).

This sequence belongs to the phosphohexose mutase family. Requires Mg(2+) as cofactor. In terms of processing, activated by phosphorylation.

It catalyses the reaction alpha-D-glucosamine 1-phosphate = D-glucosamine 6-phosphate. Functionally, catalyzes the conversion of glucosamine-6-phosphate to glucosamine-1-phosphate. This is Phosphoglucosamine mutase from Rhizobium johnstonii (strain DSM 114642 / LMG 32736 / 3841) (Rhizobium leguminosarum bv. viciae).